The following is a 378-amino-acid chain: Serpin B6 (378 aa).

Methionine 1 carries the N-acetylmethionine modification. An N6-acetyllysine modification is found at lysine 196.

Belongs to the serpin family. Ov-serpin subfamily. As to quaternary structure, forms a complex with the monomeric form of beta-tryptase. In terms of tissue distribution, brain.

It is found in the cytoplasm. Functionally, inhibitor of cathepsin G, kallikrein-8 and thrombin. May play an important role in the inner ear in the protection against leakage of lysosomal content during stress. May be involved in the regulation of serine proteinases present in the brain or extravasated from the blood. In Bos taurus (Bovine), this protein is Serpin B6 (SERPINB6).